The primary structure comprises 170 residues: Ureidoglycolate lyase (170 aa).

This sequence belongs to the ureidoglycolate lyase family. In terms of assembly, homodimer. The cofactor is Ni(2+).

It catalyses the reaction (S)-ureidoglycolate = urea + glyoxylate. Its pathway is nitrogen metabolism; (S)-allantoin degradation. Functionally, catalyzes the catabolism of the allantoin degradation intermediate (S)-ureidoglycolate, generating urea and glyoxylate. Involved in the utilization of allantoin as nitrogen source. This Stutzerimonas stutzeri (strain A1501) (Pseudomonas stutzeri) protein is Ureidoglycolate lyase.